A 597-amino-acid chain; its full sequence is MKHIRNFSIIAHIDHGKSTLSDRLIQVCGGLSDREMAEQVLDSMELERERGITIKAQSVTLDYKAQDGETYQLNFIDTPGHVDFSYEVSRSLAACEGALLVVDAGQGVEAQTLANCYTAIEMDLEVVPILNKIDLPAAEPERVAEEIEDIVGIDAIDAVRCSAKTGLGVDDVLEKIVSAIPAPEGDPEAPLQALIIDSWFDNYLGVVSLVRIKHGKLKKNDKIKVMSTGQVWGVDRLGIFTPKQIDTTELNTGEVGWVVCGIKDILGAPVGDTLTLAKNGAEKALPGFKKVKPQVYAGLFPVSSDDYEAFRDALGKLSLNDASLFYEPENSAALGFGFRCGFLGMLHMEIIQERLEREYDLDLITTAPTVVYEVLTTSKQTIYVDSPAKLPAVNDVAEIREPIARCNILVPADYLGNVITLCIEKRGTQVDMVYHGNQVALTYDIPMAEVVLDFFDRLKSTSRGYASLDYGFQRFEESNMVRVDVLLNGDKVDALAIITHKDQSQTRGRQLVEKMKEFIPRQMFDIAIQAAIGNHIIARSTVKQLRKNVLAKCYGGDVSRKKKLLKKQKEGKKRMKQIGNVELPQEAFLAILHVGKD.

One can recognise a tr-type G domain in the interval 2–184 (KHIRNFSIIA…KIVSAIPAPE (183 aa)). Residues 14-19 (DHGKST) and 131-134 (NKID) each bind GTP.

This sequence belongs to the TRAFAC class translation factor GTPase superfamily. Classic translation factor GTPase family. LepA subfamily.

It localises to the cell inner membrane. It catalyses the reaction GTP + H2O = GDP + phosphate + H(+). Functionally, required for accurate and efficient protein synthesis under certain stress conditions. May act as a fidelity factor of the translation reaction, by catalyzing a one-codon backward translocation of tRNAs on improperly translocated ribosomes. Back-translocation proceeds from a post-translocation (POST) complex to a pre-translocation (PRE) complex, thus giving elongation factor G a second chance to translocate the tRNAs correctly. Binds to ribosomes in a GTP-dependent manner. The sequence is that of Elongation factor 4 from Vibrio vulnificus (strain CMCP6).